The following is a 423-amino-acid chain: Kynureninase (423 aa).

Pyridoxal 5'-phosphate is bound by residues leucine 105, serine 106, 133 to 136 (FPSD), aspartate 218, histidine 221, and tyrosine 243. Lysine 244 carries the post-translational modification N6-(pyridoxal phosphate)lysine. Pyridoxal 5'-phosphate-binding residues include tryptophan 273 and asparagine 301.

The protein belongs to the kynureninase family. As to quaternary structure, homodimer. It depends on pyridoxal 5'-phosphate as a cofactor.

The enzyme catalyses L-kynurenine + H2O = anthranilate + L-alanine + H(+). It carries out the reaction 3-hydroxy-L-kynurenine + H2O = 3-hydroxyanthranilate + L-alanine + H(+). The protein operates within amino-acid degradation; L-kynurenine degradation; L-alanine and anthranilate from L-kynurenine: step 1/1. Its pathway is cofactor biosynthesis; NAD(+) biosynthesis; quinolinate from L-kynurenine: step 2/3. In terms of biological role, catalyzes the cleavage of L-kynurenine (L-Kyn) and L-3-hydroxykynurenine (L-3OHKyn) into anthranilic acid (AA) and 3-hydroxyanthranilic acid (3-OHAA), respectively. The protein is Kynureninase of Xanthomonas euvesicatoria pv. vesicatoria (strain 85-10) (Xanthomonas campestris pv. vesicatoria).